We begin with the raw amino-acid sequence, 251 residues long: uncharacterized protein (251 aa).

This sequence belongs to the chlamydial CPn_0206/CT_203/TC_0475 family.

This is an uncharacterized protein from Chlamydia trachomatis serovar D (strain ATCC VR-885 / DSM 19411 / UW-3/Cx).